The sequence spans 154 residues: Interleukin-2 (154 aa).

Residues 1–20 (MYKIQLLSCIALTLILVTNS) form the signal peptide. Cys78 and Cys126 form a disulfide bridge. Residue Asn111 is glycosylated (N-linked (GlcNAc...) asparagine).

This sequence belongs to the IL-2 family.

The protein localises to the secreted. Its function is as follows. Cytokine produced by activated CD4-positive helper T-cells and to a lesser extend activated CD8-positive T-cells and natural killer (NK) cells that plays pivotal roles in the immune response and tolerance. Binds to a receptor complex composed of either the high-affinity trimeric IL-2R (IL2RA/CD25, IL2RB/CD122 and IL2RG/CD132) or the low-affinity dimeric IL-2R (IL2RB and IL2RG). Interaction with the receptor leads to oligomerization and conformation changes in the IL-2R subunits resulting in downstream signaling starting with phosphorylation of JAK1 and JAK3. In turn, JAK1 and JAK3 phosphorylate the receptor to form a docking site leading to the phosphorylation of several substrates including STAT5. This process leads to activation of several pathways including STAT, phosphoinositide-3-kinase/PI3K and mitogen-activated protein kinase/MAPK pathways. Functions as a T-cell growth factor and can increase NK-cell cytolytic activity as well. Promotes strong proliferation of activated B-cells and subsequently immunoglobulin production. Plays a pivotal role in regulating the adaptive immune system by controlling the survival and proliferation of regulatory T-cells, which are required for the maintenance of immune tolerance. Moreover, participates in the differentiation and homeostasis of effector T-cell subsets, including Th1, Th2, Th17 as well as memory CD8-positive T-cells. The chain is Interleukin-2 (IL2) from Felis catus (Cat).